The primary structure comprises 342 residues: tRNA N6-adenosine threonylcarbamoyltransferase (342 aa).

Fe cation is bound by residues His112 and His116. Residues 134–138 (IVSGG), Asp167, Gly180, and Asn278 each bind substrate. Asp306 is a binding site for Fe cation.

It belongs to the KAE1 / TsaD family. Requires Fe(2+) as cofactor.

It localises to the cytoplasm. It carries out the reaction L-threonylcarbamoyladenylate + adenosine(37) in tRNA = N(6)-L-threonylcarbamoyladenosine(37) in tRNA + AMP + H(+). Functionally, required for the formation of a threonylcarbamoyl group on adenosine at position 37 (t(6)A37) in tRNAs that read codons beginning with adenine. Is involved in the transfer of the threonylcarbamoyl moiety of threonylcarbamoyl-AMP (TC-AMP) to the N6 group of A37, together with TsaE and TsaB. TsaD likely plays a direct catalytic role in this reaction. This chain is tRNA N6-adenosine threonylcarbamoyltransferase, found in Anaplasma phagocytophilum (strain HZ).